We begin with the raw amino-acid sequence, 189 residues long: Elongation factor P (189 aa).

The protein belongs to the elongation factor P family.

It is found in the cytoplasm. It participates in protein biosynthesis; polypeptide chain elongation. In terms of biological role, involved in peptide bond synthesis. Stimulates efficient translation and peptide-bond synthesis on native or reconstituted 70S ribosomes in vitro. Probably functions indirectly by altering the affinity of the ribosome for aminoacyl-tRNA, thus increasing their reactivity as acceptors for peptidyl transferase. In Sinorhizobium medicae (strain WSM419) (Ensifer medicae), this protein is Elongation factor P.